The following is a 362-amino-acid chain: Ferredoxin--NADP reductase, leaf-type isozyme, chloroplastic (362 aa).

The segment at 1–20 is disordered; the sequence is MATAVSAAVSLPSSKSTSFS. Residues 1 to 62 constitute a chloroplast transit peptide; the sequence is MATAVSAAVS…RAQVTTEAPA (62 aa). A compositionally biased stretch (low complexity) spans 10–20; that stretch reads SLPSSKSTSFS. Residues 83–205 form the FAD-binding FR-type domain; the sequence is KEPYVGRCLL…TGPVGKEMLM (123 aa). Residues 141 to 144, 162 to 164, tyrosine 168, 179 to 181, and threonine 220 contribute to the FAD site; these read RLYS, CVK, and VCS. Serine 144 and lysine 164 together coordinate NADP(+). NADP(+) is bound by residues threonine 220, 252–253, 282–283, lysine 292, 321–322, and glutamate 360; these read VP, SR, and GL.

This sequence belongs to the ferredoxin--NADP reductase type 1 family. Requires FAD as cofactor.

Its subcellular location is the plastid. The protein resides in the chloroplast stroma. The protein localises to the chloroplast thylakoid membrane. The catalysed reaction is 2 reduced [2Fe-2S]-[ferredoxin] + NADP(+) + H(+) = 2 oxidized [2Fe-2S]-[ferredoxin] + NADPH. It functions in the pathway energy metabolism; photosynthesis. Functionally, may play a key role in regulating the relative amounts of cyclic and non-cyclic electron flow to meet the demands of the plant for ATP and reducing power. In Nicotiana tabacum (Common tobacco), this protein is Ferredoxin--NADP reductase, leaf-type isozyme, chloroplastic (PETH).